A 233-amino-acid polypeptide reads, in one-letter code: Small ribosomal subunit protein uS7m (233 aa).

Residues methionine 1–tyrosine 28 constitute a mitochondrion transit peptide.

This sequence belongs to the universal ribosomal protein uS7 family. In terms of assembly, component of the mitochondrial ribosome small subunit (28S) which comprises a 12S rRNA and about 30 distinct proteins.

Its subcellular location is the mitochondrion. This chain is Small ribosomal subunit protein uS7m (mrps7), found in Xenopus laevis (African clawed frog).